Here is a 642-residue protein sequence, read N- to C-terminus: Threonine--tRNA ligase (642 aa).

Positions 239–530 are catalytic; the sequence is DHRKLGKELN…LTEHYAGAFP (292 aa). Residues Cys331, His382, and His507 each contribute to the Zn(2+) site.

Belongs to the class-II aminoacyl-tRNA synthetase family. As to quaternary structure, homodimer. It depends on Zn(2+) as a cofactor.

The protein localises to the cytoplasm. It catalyses the reaction tRNA(Thr) + L-threonine + ATP = L-threonyl-tRNA(Thr) + AMP + diphosphate + H(+). Its function is as follows. Catalyzes the attachment of threonine to tRNA(Thr) in a two-step reaction: L-threonine is first activated by ATP to form Thr-AMP and then transferred to the acceptor end of tRNA(Thr). Also edits incorrectly charged L-seryl-tRNA(Thr). In Lawsonia intracellularis (strain PHE/MN1-00), this protein is Threonine--tRNA ligase.